The following is a 163-amino-acid chain: T-cell surface glycoprotein CD3 zeta chain (163 aa).

A signal peptide spans 1–21; that stretch reads MKWKALFTAAILQAQLPITEA. At 22-30 the chain is on the extracellular side; it reads QSFGLLDPK. Residues 31–51 traverse the membrane as a helical segment; the sequence is LCYLLDGILFIYGVILTALFL. Residues 52–163 are Cytoplasmic-facing; that stretch reads RVKFSRSADA…ALHMQALPPR (112 aa). Ser-58 is modified (phosphoserine). 3 ITAM domains span residues 61–89, 99–127, and 130–158; these read APAY…LDKR, KPRR…EIGM, and ERRR…LHMQ. A phosphotyrosine mark is found at Tyr-64, Tyr-72, Tyr-83, Tyr-110, Tyr-122, Tyr-141, and Tyr-152. Basic and acidic residues predominate over residues 83-98; sequence YDVLDKRRGRDPEMGG. A disordered region spans residues 83–111; it reads YDVLDKRRGRDPEMGGKPRRKNPQEGLYN.

It belongs to the CD3Z/FCER1G family. The TCR-CD3 complex is composed of a CD3D/CD3E and a CD3G/CD3E heterodimers that preferentially associate with TCRalpha and TCRbeta, respectively, to form TCRalpha/CD3E/CD3G and TCRbeta/CD3G/CD3E trimers. In turn, the hexamer interacts with CD3Z homodimer to form the TCR-CD3 complex. Alternatively, TCRalpha and TCRbeta can be replaced by TCRgamma and TCRdelta. Interacts with SLA. Interacts with TRAT1. Interacts with DOCK2. Interacts with SLA2. Interacts with SHB. Interacts with ZAP70. Interacts (tyrosine phosphorylated) with SHC1 (via SH2 domain). Interacts with PTPRC. Interacts with CRK; this interaction regulates CD3Z phosphorylation. Interacts (on T cell side) with CD81, ICAM1 and CD9 at immunological synapses between antigen-presenting cells and T cells. Interacts with CD160. Interacts with LY6E. Interacts with LY6E. The signaling subunit of immunoglobulin gamma (IgG) Fc receptor complex. As a homodimer or a heterodimer with FCER1G, associates with the ligand binding subunit FCGR3A (via transmembrane domain); this interaction is a prerequisite for Fc receptor complex expression on the cell surface. Interacts with CD5. Post-translationally, phosphorylated on Tyr residues after T-cell receptor triggering by LCK in association with CD4/CD8.

It is found in the cell membrane. Part of the TCR-CD3 complex present on T-lymphocyte cell surface that plays an essential role in adaptive immune response. When antigen presenting cells (APCs) activate T-cell receptor (TCR), TCR-mediated signals are transmitted across the cell membrane by the CD3 chains CD3D, CD3E, CD3G and CD3Z. All CD3 chains contain immunoreceptor tyrosine-based activation motifs (ITAMs) in their cytoplasmic domain. Upon TCR engagement, these motifs become phosphorylated by Src family protein tyrosine kinases LCK and FYN, resulting in the activation of downstream signaling pathways. CD3Z ITAMs phosphorylation creates multiple docking sites for the protein kinase ZAP70 leading to ZAP70 phosphorylation and its conversion into a catalytically active enzyme. Plays an important role in intrathymic T-cell differentiation. Additionally, participates in the activity-dependent synapse formation of retinal ganglion cells (RGCs) in both the retina and dorsal lateral geniculate nucleus (dLGN). In Sus scrofa (Pig), this protein is T-cell surface glycoprotein CD3 zeta chain (CD247).